We begin with the raw amino-acid sequence, 294 residues long: Tetraspanin-15 (294 aa).

Residues 1–23 are Cytoplasmic-facing; it reads MPRGDSEQVRYCARFSYLWLKFS. A helical transmembrane segment spans residues 24–44; that stretch reads LIIYSTVFWLIGGLVLSVGIY. Topologically, residues 45–62 are extracellular; sequence AEAERQKYKTLESAFLAP. Residues 63 to 83 form a helical membrane-spanning segment; the sequence is AIILILLGVVMFIVSFIGVLA. The Cytoplasmic portion of the chain corresponds to 84 to 94; that stretch reads SLRDNLCLLQS. Residues 95–115 traverse the membrane as a helical segment; sequence FMYILGICLVMELIGGIVALI. Residues 116–235 are Extracellular-facing; that stretch reads FRNQTIDFLN…WFMDNYTIMA (120 aa). N-linked (GlcNAc...) asparagine glycosylation occurs at N118. 4 disulfides stabilise this stretch: C154/C219, C155/C185, C171/C179, and C186/C198. N-linked (GlcNAc...) asparagine glycosylation is found at N189 and N230. A helical transmembrane segment spans residues 236-256; the sequence is GLLLGILLPQFLGVLLTLLYI. Over 257–294 the chain is Cytoplasmic; it reads TRVEDIILEHSVTDGLLGPGAKSRTDTAGTGCCLCYPD.

The protein belongs to the tetraspanin (TM4SF) family. In terms of assembly, interacts with ADAM10; the interaction influences ADAM10 substrate specificity, endocytosis and turnover. In terms of processing, palmitoylated.

Its subcellular location is the cell membrane. The protein resides in the late endosome membrane. Its function is as follows. Part of TspanC8 subgroup, composed of 6 members that interact with the transmembrane metalloprotease ADAM10. This interaction is required for ADAM10 exit from the endoplasmic reticulum and for enzymatic maturation and trafficking to the cell surface as well as substrate specificity. Different TspanC8/ADAM10 complexes have distinct substrates. Promotes ADAM10-mediated cleavage of CDH2. Negatively regulates ligand-induced Notch activity probably by regulating ADAM10 activity. The protein is Tetraspanin-15 (Tspan15) of Mus musculus (Mouse).